The chain runs to 1378 residues: DNA-directed RNA polymerase subunit beta' (1378 aa).

The Zn(2+) site is built by cysteine 69, cysteine 71, cysteine 84, and cysteine 87. Mg(2+) is bound by residues aspartate 460, aspartate 462, and aspartate 464. Zn(2+) is bound by residues cysteine 808, cysteine 882, cysteine 889, and cysteine 892.

It belongs to the RNA polymerase beta' chain family. In terms of assembly, the RNAP catalytic core consists of 2 alpha, 1 beta, 1 beta' and 1 omega subunit. When a sigma factor is associated with the core the holoenzyme is formed, which can initiate transcription. The cofactor is Mg(2+). Zn(2+) serves as cofactor.

It catalyses the reaction RNA(n) + a ribonucleoside 5'-triphosphate = RNA(n+1) + diphosphate. Its function is as follows. DNA-dependent RNA polymerase catalyzes the transcription of DNA into RNA using the four ribonucleoside triphosphates as substrates. This Rickettsia canadensis (strain McKiel) protein is DNA-directed RNA polymerase subunit beta'.